The following is a 353-amino-acid chain: tRNA N6-adenosine threonylcarbamoyltransferase (353 aa).

Fe cation contacts are provided by H115 and H119. Substrate is bound by residues 138 to 142, D171, G184, and N276; that span reads LVSGG. D304 contacts Fe cation.

It belongs to the KAE1 / TsaD family. It depends on Fe(2+) as a cofactor.

It is found in the cytoplasm. The enzyme catalyses L-threonylcarbamoyladenylate + adenosine(37) in tRNA = N(6)-L-threonylcarbamoyladenosine(37) in tRNA + AMP + H(+). In terms of biological role, required for the formation of a threonylcarbamoyl group on adenosine at position 37 (t(6)A37) in tRNAs that read codons beginning with adenine. Is involved in the transfer of the threonylcarbamoyl moiety of threonylcarbamoyl-AMP (TC-AMP) to the N6 group of A37, together with TsaE and TsaB. TsaD likely plays a direct catalytic role in this reaction. The protein is tRNA N6-adenosine threonylcarbamoyltransferase of Xanthomonas euvesicatoria pv. vesicatoria (strain 85-10) (Xanthomonas campestris pv. vesicatoria).